Here is a 338-residue protein sequence, read N- to C-terminus: D-erythrose-4-phosphate dehydrogenase (338 aa).

Position 12–13 (12–13 (RI)) interacts with NAD(+). Substrate-binding positions include 154–156 (SCT), Arg-200, 213–214 (TK), and Arg-236. Cys-155 functions as the Nucleophile in the catalytic mechanism. Asn-318 serves as a coordination point for NAD(+).

It belongs to the glyceraldehyde-3-phosphate dehydrogenase family. Epd subfamily. In terms of assembly, homotetramer.

It localises to the cytoplasm. The catalysed reaction is D-erythrose 4-phosphate + NAD(+) + H2O = 4-phospho-D-erythronate + NADH + 2 H(+). Its pathway is cofactor biosynthesis; pyridoxine 5'-phosphate biosynthesis; pyridoxine 5'-phosphate from D-erythrose 4-phosphate: step 1/5. Catalyzes the NAD-dependent conversion of D-erythrose 4-phosphate to 4-phosphoerythronate. In Tolumonas auensis (strain DSM 9187 / NBRC 110442 / TA 4), this protein is D-erythrose-4-phosphate dehydrogenase.